Reading from the N-terminus, the 146-residue chain is uncharacterized protein (146 aa).

The HTH marR-type domain maps to 1-137 (MLSQEFFNSF…TINVMNQIHE (137 aa)).

This is an uncharacterized protein from Staphylococcus aureus (strain N315).